A 1449-amino-acid polypeptide reads, in one-letter code: Gag-Pol polyprotein (1449 aa).

A lipid anchor (N-myristoyl glycine; by host) is attached at G2. The short motif at 16–22 is the Nuclear export signal element; the sequence is LEKIRLR. The short motif at 26-32 is the Nuclear localization signal element; the sequence is KKRYQLK. 2 consecutive CCHC-type zinc fingers follow at residues 392-409 and 413-430; these read IKCW…QCRA and QGCW…KCPE. The tract at residues 442-494 is disordered; that stretch reads GKEAPQFPHGPDASGADTNCSPRGSSCGSTEELHEDGQKAEGEQRETLQGGNG. The span at 457-470 shows a compositional bias: polar residues; the sequence is ADTNCSPRGSSCGS. The span at 472 to 487 shows a compositional bias: basic and acidic residues; that stretch reads EELHEDGQKAEGEQRE. The Peptidase A2 domain maps to 518 to 587; sequence VEVLLDTGAD…TPINIFGRNL (70 aa). D523 serves as the catalytic For protease activity; shared with dimeric partner. Positions 641 to 831 constitute a Reverse transcriptase domain; that stretch reads DGQLEEAPPT…PPFQWMGYEL (191 aa). Residues D707, D782, and D783 each contribute to the Mg(2+) site. The segment at 824 to 832 is RT 'primer grip'; sequence FQWMGYELW. Positions 994-1010 match the Tryptophan repeat motif motif; the sequence is WEQWWTDYWQVTWIPEW. In terms of domain architecture, RNase H type-1 spans 1030–1153; the sequence is IQGAETFYVD…VDHLVSQGIR (124 aa). The Mg(2+) site is built by D1039, E1074, D1094, and D1145. The Integrase-type zinc-finger motif lies at 1159–1200; sequence EKIEPAQEEHEKYHSNVKELVFKFGLPRLVAKQIVDTCDKCH. Residues H1168, H1172, C1196, and C1199 each coordinate Zn(2+). The Integrase catalytic domain occupies 1210-1360; sequence VNAELGTWQM…TPAERLVNMI (151 aa). The Mg(2+) site is built by D1220 and D1272. The segment at residues 1379–1426 is a DNA-binding region (integrase-type); that stretch reads FRVYYREGRDQLWKGPGELLWKGEGAVILKVGTEIKVVPRRKAKIIKD.

As to quaternary structure, homotrimer. Interacts with gp41 (via C-terminus). Homodimer. The active site consists of two apposed aspartic acid residues. In terms of assembly, heterodimer of p66 RT and p51 RT (RT p66/p51). Heterodimerization of RT is essential for DNA polymerase activity. Despite the sequence identities, p66 RT and p51 RT have distinct folding. As to quaternary structure, homotetramer; may further associate as a homohexadecamer. Mg(2+) is required as a cofactor. In terms of processing, specific enzymatic cleavages by the viral protease yield mature proteins. The protease is released by autocatalytic cleavage. The polyprotein is cleaved during and after budding, this process is termed maturation. Proteolytic cleavage of p66 RT removes the RNase H domain to yield the p51 RT subunit. Post-translationally, capsid protein p24 is phosphorylated.

Its subcellular location is the virion. It is found in the host nucleus. The protein resides in the host cytoplasm. The protein localises to the host cell membrane. The enzyme catalyses Specific for a P1 residue that is hydrophobic, and P1' variable, but often Pro.. It carries out the reaction Endohydrolysis of RNA in RNA/DNA hybrids. Three different cleavage modes: 1. sequence-specific internal cleavage of RNA. Human immunodeficiency virus type 1 and Moloney murine leukemia virus enzymes prefer to cleave the RNA strand one nucleotide away from the RNA-DNA junction. 2. RNA 5'-end directed cleavage 13-19 nucleotides from the RNA end. 3. DNA 3'-end directed cleavage 15-20 nucleotides away from the primer terminus.. The catalysed reaction is 3'-end directed exonucleolytic cleavage of viral RNA-DNA hybrid.. It catalyses the reaction DNA(n) + a 2'-deoxyribonucleoside 5'-triphosphate = DNA(n+1) + diphosphate. Its activity is regulated as follows. The viral protease is inhibited by many synthetic protease inhibitors (PIs), such as amprenavir, atazanavir, indinavir, loprinavir, nelfinavir, ritonavir and saquinavir. RT can be inhibited either by nucleoside RT inhibitors (NRTIs) or by non nucleoside RT inhibitors (NNRTIs). NRTIs act as chain terminators, whereas NNRTIs inhibit DNA polymerization by binding a small hydrophobic pocket near the RT active site and inducing an allosteric change in this region. Classical NRTIs are abacavir, adefovir (PMEA), didanosine (ddI), lamivudine (3TC), stavudine (d4T), tenofovir (PMPA), zalcitabine (ddC), and zidovudine (AZT). Classical NNRTIs are atevirdine (BHAP U-87201E), delavirdine, efavirenz (DMP-266), emivirine (I-EBU), and nevirapine (BI-RG-587). The tritherapies used as a basic effective treatment of AIDS associate two NRTIs and one NNRTI. Use of protease inhibitors in tritherapy regimens permit more ambitious therapeutic strategies. Gag-Pol polyprotein and Gag polyprotein may regulate their own translation, by the binding genomic RNA in the 5'-UTR. At low concentration, Gag-Pol and Gag would promote translation, whereas at high concentration, the polyproteins encapsidate genomic RNA and then shut off translation. Functionally, matrix protein p17 has two main functions: in infected cell, it targets Gag and Gag-pol polyproteins to the plasma membrane via a multipartite membrane-binding signal, that includes its myristointegration complex. The myristoylation signal and the NLS exert conflicting influences its subcellular localization. The key regulation of these motifs might be phosphorylation of a portion of MA molecules on the C-terminal tyrosine at the time of virus maturation, by virion-associated cellular tyrosine kinase. Implicated in the release from host cell mediated by Vpu. Its function is as follows. Capsid protein p24 forms the conical core that encapsulates the genomic RNA-nucleocapsid complex in the virion. The core is constituted by capsid protein hexamer subunits. The core is disassembled soon after virion entry. Interaction with host PPIA/CYPA protects the virus from restriction by host TRIM5-alpha and from an unknown antiviral activity in host cells. This capsid restriction by TRIM5 is one of the factors which restricts SIV to the simian species. In terms of biological role, nucleocapsid protein p7 encapsulates and protects viral dimeric unspliced (genomic) RNA. Binds these RNAs through its zinc fingers. Facilitates rearangement of nucleic acid secondary structure during retrotranscription of genomic RNA. This capability is referred to as nucleic acid chaperone activity. The aspartyl protease mediates proteolytic cleavages of Gag and Gag-Pol polyproteins during or shortly after the release of the virion from the plasma membrane. Cleavages take place as an ordered, step-wise cascade to yield mature proteins. This process is called maturation. Displays maximal activity during the budding process just prior to particle release from the cell. Also cleaves Nef and Vif, probably concomitantly with viral structural proteins on maturation of virus particles. Hydrolyzes host EIF4GI and PABP1 in order to shut off the capped cellular mRNA translation. The resulting inhibition of cellular protein synthesis serves to ensure maximal viral gene expression and to evade host immune response. Functionally, reverse transcriptase/ribonuclease H (RT) is a multifunctional enzyme that converts the viral dimeric RNA genome into dsDNA in the cytoplasm, shortly after virus entry into the cell. This enzyme displays a DNA polymerase activity that can copy either DNA or RNA templates, and a ribonuclease H (RNase H) activity that cleaves the RNA strand of RNA-DNA heteroduplexes in a partially processive 3' to 5' endonucleasic mode. Conversion of viral genomic RNA into dsDNA requires many steps. A tRNA binds to the primer-binding site (PBS) situated at the 5'-end of the viral RNA. RT uses the 3' end of the tRNA primer to perform a short round of RNA-dependent minus-strand DNA synthesis. The reading proceeds through the U5 region and ends after the repeated (R) region which is present at both ends of viral RNA. The portion of the RNA-DNA heteroduplex is digested by the RNase H, resulting in a ssDNA product attached to the tRNA primer. This ssDNA/tRNA hybridizes with the identical R region situated at the 3' end of viral RNA. This template exchange, known as minus-strand DNA strong stop transfer, can be either intra- or intermolecular. RT uses the 3' end of this newly synthesized short ssDNA to perform the RNA-dependent minus-strand DNA synthesis of the whole template. RNase H digests the RNA template except for two polypurine tracts (PPTs) situated at the 5'-end and near the center of the genome. It is not clear if both polymerase and RNase H activities are simultaneous. RNase H can probably proceed both in a polymerase-dependent (RNA cut into small fragments by the same RT performing DNA synthesis) and a polymerase-independent mode (cleavage of remaining RNA fragments by free RTs). Secondly, RT performs DNA-directed plus-strand DNA synthesis using the PPTs that have not been removed by RNase H as primers. PPTs and tRNA primers are then removed by RNase H. The 3' and 5' ssDNA PBS regions hybridize to form a circular dsDNA intermediate. Strand displacement synthesis by RT to the PBS and PPT ends produces a blunt ended, linear dsDNA copy of the viral genome that includes long terminal repeats (LTRs) at both ends. Its function is as follows. Integrase catalyzes viral DNA integration into the host chromosome, by performing a series of DNA cutting and joining reactions. This enzyme activity takes place after virion entry into a cell and reverse transcription of the RNA genome in dsDNA. The first step in the integration process is 3' processing. This step requires a complex comprising the viral genome, matrix protein, Vpr and integrase. This complex is called the pre-integration complex (PIC). The integrase protein removes 2 nucleotides from each 3' end of the viral DNA, leaving recessed CA OH's at the 3' ends. In the second step, the PIC enters cell nucleus. This process is mediated through integrase and Vpr proteins, and allows the virus to infect a non dividing cell. This ability to enter the nucleus is specific of lentiviruses, other retroviruses cannot and rely on cell division to access cell chromosomes. In the third step, termed strand transfer, the integrase protein joins the previously processed 3' ends to the 5' ends of strands of target cellular DNA at the site of integration. The 5'-ends are produced by integrase-catalyzed staggered cuts, 5 bp apart. A Y-shaped, gapped, recombination intermediate results, with the 5'-ends of the viral DNA strands and the 3' ends of target DNA strands remaining unjoined, flanking a gap of 5 bp. The last step is viral DNA integration into host chromosome. This involves host DNA repair synthesis in which the 5 bp gaps between the unjoined strands are filled in and then ligated. Since this process occurs at both cuts flanking the SIV genome, a 5 bp duplication of host DNA is produced at the ends of SIV integration. Alternatively, Integrase may catalyze the excision of viral DNA just after strand transfer, this is termed disintegration. The protein is Gag-Pol polyprotein (gag-pol) of Cercopithecidae (Old World monkeys).